We begin with the raw amino-acid sequence, 432 residues long: Serine hydroxymethyltransferase (432 aa).

(6S)-5,6,7,8-tetrahydrofolate-binding positions include leucine 131 and 135–137 (GHL). Residue lysine 240 is modified to N6-(pyridoxal phosphate)lysine.

This sequence belongs to the SHMT family. Homodimer. Requires pyridoxal 5'-phosphate as cofactor.

The protein localises to the cytoplasm. The enzyme catalyses (6R)-5,10-methylene-5,6,7,8-tetrahydrofolate + glycine + H2O = (6S)-5,6,7,8-tetrahydrofolate + L-serine. The protein operates within one-carbon metabolism; tetrahydrofolate interconversion. Its pathway is amino-acid biosynthesis; glycine biosynthesis; glycine from L-serine: step 1/1. Catalyzes the reversible interconversion of serine and glycine with tetrahydrofolate (THF) serving as the one-carbon carrier. This reaction serves as the major source of one-carbon groups required for the biosynthesis of purines, thymidylate, methionine, and other important biomolecules. Also exhibits THF-independent aldolase activity toward beta-hydroxyamino acids, producing glycine and aldehydes, via a retro-aldol mechanism. The chain is Serine hydroxymethyltransferase from Bradyrhizobium diazoefficiens (strain JCM 10833 / BCRC 13528 / IAM 13628 / NBRC 14792 / USDA 110).